The following is a 313-amino-acid chain: 2,3-dihydroxyphenylpropionate/2,3-dihydroxicinnamic acid 1,2-dioxygenase (313 aa).

His-115 serves as the catalytic Proton donor. His-179 acts as the Proton acceptor in catalysis.

Belongs to the LigB/MhpB extradiol dioxygenase family. As to quaternary structure, homotetramer. Requires Fe(2+) as cofactor.

It catalyses the reaction 3-(2,3-dihydroxyphenyl)propanoate + O2 = (2Z,4E)-2-hydroxy-6-oxonona-2,4-dienedioate + H(+). The catalysed reaction is (2E)-3-(2,3-dihydroxyphenyl)prop-2-enoate + O2 = (2Z,4E,7E)-2-hydroxy-6-oxonona-2,4,7-trienedioate + H(+). It functions in the pathway aromatic compound metabolism; 3-phenylpropanoate degradation. Functionally, catalyzes the non-heme iron(II)-dependent oxidative cleavage of 2,3-dihydroxyphenylpropionic acid and 2,3-dihydroxicinnamic acid into 2-hydroxy-6-ketononadienedioate and 2-hydroxy-6-ketononatrienedioate, respectively. In Mycolicibacterium smegmatis (strain ATCC 700084 / mc(2)155) (Mycobacterium smegmatis), this protein is 2,3-dihydroxyphenylpropionate/2,3-dihydroxicinnamic acid 1,2-dioxygenase.